The following is a 405-amino-acid chain: Alpha-1-antiproteinase S (405 aa).

An N-terminal signal peptide occupies residues 1–24 (MPSAIPRGLLLLAGLCCLVFGIMA). 4 N-linked (GlcNAc...) asparagine glycosylation sites follow: Asn-57, Asn-94, Asn-157, and Asn-258. Positions 360 to 379 (GATMMEFMPMSLPEDLSFNK) are RCL.

The protein belongs to the serpin family.

The protein localises to the secreted. Its function is as follows. Inhibits elastase, chymotrypsin, cathepsin G, plasmin, and trypsin. This is Alpha-1-antiproteinase S from Cavia porcellus (Guinea pig).